Consider the following 733-residue polypeptide: Acyl-coenzyme A oxidase (733 aa).

The protein belongs to the acyl-CoA oxidase family. FAD serves as cofactor.

The protein resides in the peroxisome. It catalyses the reaction a 2,3-saturated acyl-CoA + O2 = a (2E)-enoyl-CoA + H2O2. It participates in lipid metabolism; peroxisomal fatty acid beta-oxidation. This chain is Acyl-coenzyme A oxidase (POX1), found in Eremothecium gossypii (strain ATCC 10895 / CBS 109.51 / FGSC 9923 / NRRL Y-1056) (Yeast).